A 308-amino-acid chain; its full sequence is Oxygen-dependent coproporphyrinogen-III oxidase (308 aa).

Residue Ser-100 participates in substrate binding. A divalent metal cation-binding residues include His-104 and His-114. His-114 (proton donor) is an active-site residue. A substrate-binding site is contributed by 116–118 (NFR). The a divalent metal cation site is built by His-153 and His-183. The interval 248 to 283 (YVEFNLVFDRGTIFGLQSGGRTESILSSMPPMATWK) is important for dimerization. 266–268 (GGR) is a substrate binding site.

Belongs to the aerobic coproporphyrinogen-III oxidase family. Homodimer. It depends on a divalent metal cation as a cofactor.

The protein resides in the cytoplasm. It catalyses the reaction coproporphyrinogen III + O2 + 2 H(+) = protoporphyrinogen IX + 2 CO2 + 2 H2O. It functions in the pathway porphyrin-containing compound metabolism; protoporphyrin-IX biosynthesis; protoporphyrinogen-IX from coproporphyrinogen-III (O2 route): step 1/1. Functionally, involved in the heme biosynthesis. Catalyzes the aerobic oxidative decarboxylation of propionate groups of rings A and B of coproporphyrinogen-III to yield the vinyl groups in protoporphyrinogen-IX. The sequence is that of Oxygen-dependent coproporphyrinogen-III oxidase from Francisella philomiragia subsp. philomiragia (strain ATCC 25017 / CCUG 19701 / FSC 153 / O#319-036).